Reading from the N-terminus, the 455-residue chain is MKQAVFKSTALKKPADKTFSLFSLTWPIFIEVSLYMFMGNADTLMLSQYSDNSVAAVGVSNQILNLIIVMFSFIATGTTVIISQFLGSRQKKEAMEVAYVSIGANFFISLAISAVVFFAAVPLLHMMGLSDALMPDAKVFLQVVGGLSFIQALIMTFSAILKSYGYTKDTMFVTIGMNILNIAGNFVVIFGLFGFPVLGVAGVAMSTSIARVIGLIAMIVIVNKRIQLKMSLKKVFHMHKEHLRKLLKIGIPSAGEQLSYNLSQMIVTYFIAIMGAQALTTKVYTQNITMFILLFGTAISQGTQILIGRYIGGKQFDAAYERCMKSLYWALGIAAATSVLMTIFSKDLIGLFTQSPDIIATASLLIAMTIILEPGRSFNVIIINSLRAAGDAKFPVYMAMISMWGIGLPLAYLFGIHLGFGLAGIWISFIADEWVRGILMYRRWRSRIWIQKGMA.

Helical transmembrane passes span 19-39, 63-83, 106-126, 140-160, 173-195, 200-222, 265-285, 288-308, 324-344, 348-368, 388-408, and 410-430; these read FSLF…MFMG, ILNL…VIIS, FFIS…LLHM, FLQV…FSAI, VTIG…LFGF, VAGV…IVIV, MIVT…KVYT, ITMF…ILIG, MKSL…MTIF, LIGL…LIAM, AAGD…GIGL, and LAYL…ISFI.

The protein belongs to the multi antimicrobial extrusion (MATE) (TC 2.A.66.1) family.

It is found in the cell membrane. This is an uncharacterized protein from Bacillus subtilis (strain 168).